Here is a 448-residue protein sequence, read N- to C-terminus: UDP-N-acetylmuramoylalanine--D-glutamate ligase (448 aa).

ATP is bound at residue G116–T122.

The protein belongs to the MurCDEF family.

Its subcellular location is the cytoplasm. The catalysed reaction is UDP-N-acetyl-alpha-D-muramoyl-L-alanine + D-glutamate + ATP = UDP-N-acetyl-alpha-D-muramoyl-L-alanyl-D-glutamate + ADP + phosphate + H(+). It functions in the pathway cell wall biogenesis; peptidoglycan biosynthesis. Functionally, cell wall formation. Catalyzes the addition of glutamate to the nucleotide precursor UDP-N-acetylmuramoyl-L-alanine (UMA). This chain is UDP-N-acetylmuramoylalanine--D-glutamate ligase, found in Pseudomonas savastanoi pv. phaseolicola (strain 1448A / Race 6) (Pseudomonas syringae pv. phaseolicola (strain 1448A / Race 6)).